Reading from the N-terminus, the 293-residue chain is Histamine N-methyltransferase (293 aa).

Residue glutamate 28 coordinates substrate. 5 residues coordinate S-adenosyl-L-methionine: glycine 60, glutamate 89, glutamine 94, serine 120, and isoleucine 142. Asparagine 283 is a substrate binding site.

Belongs to the class I-like SAM-binding methyltransferase superfamily. HNMT family. As to quaternary structure, monomer.

Its subcellular location is the cytoplasm. The catalysed reaction is histamine + S-adenosyl-L-methionine = N(tau)-methylhistamine + S-adenosyl-L-homocysteine + H(+). Inactivates histamine by N-methylation. Plays an important role in degrading histamine and in regulating the airway response to histamine. This chain is Histamine N-methyltransferase (hnmt), found in Xenopus tropicalis (Western clawed frog).